Here is an 86-residue protein sequence, read N- to C-terminus: Neuropeptide-like 2 (86 aa).

The N-terminal stretch at 1–19 (MAKLAICILVFALFALALS) is a signal peptide. 2 consecutive propeptides follow at residues 20 to 34 (ARVP…QEFL) and 45 to 86 (IEKL…AAST).

As to expression, hemolymph (at protein level).

The protein localises to the secreted. The polypeptide is Neuropeptide-like 2 (Nplp2) (Drosophila melanogaster (Fruit fly)).